A 452-amino-acid chain; its full sequence is Phosphoglucosamine mutase (452 aa).

The active-site Phosphoserine intermediate is the Ser-97. The Mg(2+) site is built by Ser-97, Asp-236, Asp-238, and Asp-240. Ser-97 carries the post-translational modification Phosphoserine.

Belongs to the phosphohexose mutase family. The cofactor is Mg(2+). Post-translationally, activated by phosphorylation.

It carries out the reaction alpha-D-glucosamine 1-phosphate = D-glucosamine 6-phosphate. Functionally, catalyzes the conversion of glucosamine-6-phosphate to glucosamine-1-phosphate. The protein is Phosphoglucosamine mutase of Prochlorococcus marinus subsp. pastoris (strain CCMP1986 / NIES-2087 / MED4).